Here is a 319-residue protein sequence, read N- to C-terminus: Phospho-N-acetylmuramoyl-pentapeptide-transferase (319 aa).

A run of 9 helical transmembrane segments spans residues 5-25, 51-71, 79-99, 119-139, 149-169, 173-193, 197-217, 224-246, and 299-319; these read LIAF…LIIW, TMGG…ICAY, VWIL…DDGL, LLVA…FALY, VVLF…AVNL, LDGL…WLAF, NFGV…FFMF, IFMG…IFLG, and VDLV…MIWG.

This sequence belongs to the glycosyltransferase 4 family. MraY subfamily. It depends on Mg(2+) as a cofactor.

It localises to the cell membrane. It catalyses the reaction UDP-N-acetyl-alpha-D-muramoyl-L-alanyl-gamma-D-glutamyl-L-lysyl-D-alanyl-D-alanine + di-trans,octa-cis-undecaprenyl phosphate = Mur2Ac(oyl-L-Ala-gamma-D-Glu-L-Lys-D-Ala-D-Ala)-di-trans,octa-cis-undecaprenyl diphosphate + UMP. It participates in cell wall biogenesis; peptidoglycan biosynthesis. In terms of biological role, catalyzes the initial step of the lipid cycle reactions in the biosynthesis of the cell wall peptidoglycan: transfers peptidoglycan precursor phospho-MurNAc-pentapeptide from UDP-MurNAc-pentapeptide onto the lipid carrier undecaprenyl phosphate, yielding undecaprenyl-pyrophosphoryl-MurNAc-pentapeptide, known as lipid I. This Lactobacillus delbrueckii subsp. bulgaricus (strain ATCC BAA-365 / Lb-18) protein is Phospho-N-acetylmuramoyl-pentapeptide-transferase.